We begin with the raw amino-acid sequence, 147 residues long: UPF0735 ACT domain-containing protein YszB (147 aa).

Residues 70 to 145 (TLFFHLEDRS…FVEKVEILGS (76 aa)) form the ACT domain.

Belongs to the UPF0735 family.

This chain is UPF0735 ACT domain-containing protein YszB (yszB), found in Bacillus subtilis (strain 168).